The primary structure comprises 170 residues: Large ribosomal subunit protein uL11 (170 aa).

It belongs to the universal ribosomal protein uL11 family. As to quaternary structure, part of the ribosomal stalk of the 50S ribosomal subunit. Interacts with L10 and the large rRNA to form the base of the stalk. L10 forms an elongated spine to which L12 dimers bind in a sequential fashion forming a multimeric L10(L12)X complex.

In terms of biological role, forms part of the ribosomal stalk which helps the ribosome interact with GTP-bound translation factors. The polypeptide is Large ribosomal subunit protein uL11 (Saccharolobus islandicus (strain M.14.25 / Kamchatka #1) (Sulfolobus islandicus)).